The sequence spans 93 residues: MDGIKYAVFTDKSIRLLGKNQYTSNVESGSTRTEIKHWVELFFGVKVIAMNSHQLPRKGRRMGPIMAHTMHYRRMIITLQPGYSIPPLRKKRT.

Belongs to the universal ribosomal protein uL23 family. Part of the 50S ribosomal subunit.

Its subcellular location is the plastid. It is found in the chloroplast. Functionally, binds to 23S rRNA. This Citrus sinensis (Sweet orange) protein is Large ribosomal subunit protein uL23cz/uL23cy (rpl23-A).